The chain runs to 157 residues: 6,7-dimethyl-8-ribityllumazine synthase (157 aa).

Residues Trp27, 59-61, and 81-83 contribute to the 5-amino-6-(D-ribitylamino)uracil site; these read AIE and VVI. 86-87 serves as a coordination point for (2S)-2-hydroxy-3-oxobutyl phosphate; it reads ET. His89 serves as the catalytic Proton donor. Asn114 contributes to the 5-amino-6-(D-ribitylamino)uracil binding site. Arg128 contributes to the (2S)-2-hydroxy-3-oxobutyl phosphate binding site.

It belongs to the DMRL synthase family. Homopentamer.

The enzyme catalyses (2S)-2-hydroxy-3-oxobutyl phosphate + 5-amino-6-(D-ribitylamino)uracil = 6,7-dimethyl-8-(1-D-ribityl)lumazine + phosphate + 2 H2O + H(+). The protein operates within cofactor biosynthesis; riboflavin biosynthesis; riboflavin from 2-hydroxy-3-oxobutyl phosphate and 5-amino-6-(D-ribitylamino)uracil: step 1/2. Functionally, catalyzes the formation of 6,7-dimethyl-8-ribityllumazine by condensation of 5-amino-6-(D-ribitylamino)uracil with 3,4-dihydroxy-2-butanone 4-phosphate. This is the penultimate step in the biosynthesis of riboflavin. The protein is 6,7-dimethyl-8-ribityllumazine synthase of Mycolicibacterium vanbaalenii (strain DSM 7251 / JCM 13017 / BCRC 16820 / KCTC 9966 / NRRL B-24157 / PYR-1) (Mycobacterium vanbaalenii).